Consider the following 169-residue polypeptide: Holo-[acyl-carrier-protein] synthase (169 aa).

Residues Asp-8 and Glu-50 each coordinate Mg(2+).

Belongs to the P-Pant transferase superfamily. AcpS family. The cofactor is Mg(2+).

The protein localises to the cytoplasm. The catalysed reaction is apo-[ACP] + CoA = holo-[ACP] + adenosine 3',5'-bisphosphate + H(+). Its function is as follows. Transfers the 4'-phosphopantetheine moiety from coenzyme A to a Ser of acyl-carrier-protein. The chain is Holo-[acyl-carrier-protein] synthase from Thermotoga maritima (strain ATCC 43589 / DSM 3109 / JCM 10099 / NBRC 100826 / MSB8).